The chain runs to 258 residues: Snake venom serine protease KN12 (258 aa).

A signal peptide spans 1–18; it reads MVLIRVLANLLILQLSYA. A propeptide spanning residues 19-24 is cleaved from the precursor; the sequence is QRSSEL. One can recognise a Peptidase S1 domain in the interval 25-249; that stretch reads VIGGDECNIN…HLDWIQNIIA (225 aa). 6 cysteine pairs are disulfide-bonded: Cys31–Cys163, Cys50–Cys66, Cys98–Cys256, Cys142–Cys210, Cys174–Cys189, and Cys200–Cys225. His65 serves as the catalytic Charge relay system. Residue Asn103 is glycosylated (N-linked (GlcNAc...) asparagine). Residue Asp110 is the Charge relay system of the active site. 4 N-linked (GlcNAc...) asparagine glycosylation sites follow: Asn121, Asn122, Asn154, and Asn170. The Charge relay system role is filled by Ser204. N-linked (GlcNAc...) asparagine glycosylation is present at Asn251.

This sequence belongs to the peptidase S1 family. Snake venom subfamily. As to quaternary structure, monomer. Expressed by the venom gland.

It localises to the secreted. Its function is as follows. Snake venom serine protease that may act in the hemostasis system of the prey. The chain is Snake venom serine protease KN12 from Trimeresurus stejnegeri (Chinese green tree viper).